Here is a 623-residue protein sequence, read N- to C-terminus: Glutathione import ATP-binding protein GsiA (623 aa).

ABC transporter domains follow at residues 15-269 and 325-564; these read VSGL…QTLL and LRSG…RKLM. Residues 49–56 and 357–364 each bind ATP; these read GESGSGKS.

The protein belongs to the ABC transporter superfamily. Glutathione importer (TC 3.A.1.5.11) family. The complex is composed of two ATP-binding proteins (GsiA), two transmembrane proteins (GsiC and GsiD) and a solute-binding protein (GsiB).

It is found in the cell inner membrane. The catalysed reaction is glutathione(out) + ATP + H2O = glutathione(in) + ADP + phosphate + H(+). Its function is as follows. Part of the ABC transporter complex GsiABCD involved in glutathione import. Responsible for energy coupling to the transport system. The chain is Glutathione import ATP-binding protein GsiA from Salmonella typhimurium (strain LT2 / SGSC1412 / ATCC 700720).